Reading from the N-terminus, the 158-residue chain is NADH-quinone oxidoreductase subunit B (158 aa).

4 residues coordinate [4Fe-4S] cluster: Cys37, Cys38, Cys102, and Cys132.

Belongs to the complex I 20 kDa subunit family. As to quaternary structure, NDH-1 is composed of 14 different subunits. Subunits NuoB, C, D, E, F, and G constitute the peripheral sector of the complex. [4Fe-4S] cluster is required as a cofactor.

Its subcellular location is the cell inner membrane. It catalyses the reaction a quinone + NADH + 5 H(+)(in) = a quinol + NAD(+) + 4 H(+)(out). Its function is as follows. NDH-1 shuttles electrons from NADH, via FMN and iron-sulfur (Fe-S) centers, to quinones in the respiratory chain. Couples the redox reaction to proton translocation (for every two electrons transferred, four hydrogen ions are translocated across the cytoplasmic membrane), and thus conserves the redox energy in a proton gradient. This Leptothrix cholodnii (strain ATCC 51168 / LMG 8142 / SP-6) (Leptothrix discophora (strain SP-6)) protein is NADH-quinone oxidoreductase subunit B.